Consider the following 855-residue polypeptide: Mitofusin FZO1 (855 aa).

Basic and acidic residues predominate over residues 1-19; the sequence is MSEGKQQFKDSNKPHKDST. The tract at residues 1–27 is disordered; the sequence is MSEGKQQFKDSNKPHKDSTDQDDDAAT. At 1-705 the chain is on the cytoplasmic side; sequence MSEGKQQFKD…PSLLFTSKIP (705 aa). The tract at residues 91-190 is HRN; that stretch reads NYNNNRVLLK…KRVDDVSSKV (100 aa). The Dynamin-type G domain occupies 184-467; it reads DDVSSKVFIT…KKRSLSKLLP (284 aa). GTP is bound by residues 197 to 202 and 370 to 373; these read NTGKSA and KKFD. Lys398 participates in a covalent cross-link: Glycyl lysine isopeptide (Lys-Gly) (interchain with G-Cter in ubiquitin). Ser408 contacts GTP. The span at 413–433 shows a compositional bias: basic and acidic residues; that stretch reads ELPHYHNENDNEDHGDRKPDD. The segment at 413–447 is disordered; the sequence is ELPHYHNENDNEDHGDRKPDDDPYSSSDPDPDFDS. Lys464 is covalently cross-linked (Glycyl lysine isopeptide (Lys-Gly) (interchain with G-Cter in ubiquitin)). An HR1 region spans residues 484–547; the sequence is KSNMKMYSEE…KEALLNALDV (64 aa). Residues 630–843 form a required for interaction with UGO1 region; the sequence is GKRLKVSLSI…QSLYEGTVAQ (214 aa). The helical transmembrane segment at 706 to 726 threads the bilayer; sequence TLTLYFLGSTKVVGNIILNGI. Topologically, residues 727–736 are mitochondrial intermembrane; it reads KLSSWSSLKK. The helical transmembrane segment at 737-757 threads the bilayer; that stretch reads LSVPVIVVGSLLGLTYLIHDL. Over 758–855 the chain is Cytoplasmic; sequence PRALPMNLSI…MVEEINLDID (98 aa). An HR2 region spans residues 769 to 831; that stretch reads YKRKLQELDY…KKESNLLSIK (63 aa). Positions 798 to 825 form a coiled coil; the sequence is TREILRSCEIIMDKKQITKKELENKKES.

Belongs to the TRAFAC class dynamin-like GTPase superfamily. Dynamin/Fzo/YdjA family. Mitofusin subfamily. In terms of assembly, homodimer. Dimerization depends on GTP binding. Component of a large multiprotein complex of 800 kDa. Binds the cytoplasmic domain of UGO1 which binds MGM1 through its intermembrane space domain. Interacts with MDM30. Interacts with UBP2 and UBP12. Interacts (when ubiquitinated) with DOA1; the interaction recruits FZO1 to CDC48 and promotes FZO1 proteasomal degradation. Post-translationally, ubiquitinated at Lys-398 and Lys-464. MDM30 and UGO1 are involved in ubiquitination. Deubiquitinated by UBP2 and UBP12. UBP2 and UBP12 recognize distinct ubiquitin chains on FZO1 that have opposing effects on mitochondrial fusion. UBP2 removes ubiquitin chains that initiate proteolysis of FZO1 and inhibit fusion. UBP12 recognizes ubiquitin chains that stabilize FZO1 and promote mitochondrial fusion. UBP12 deubiquitylates FZO1 only after oligomerization.

It localises to the mitochondrion outer membrane. The catalysed reaction is GTP + H2O = GDP + phosphate + H(+). In terms of biological role, essential transmembrane GTPase, which mediates mitochondrial fusion. Fusion proceeds through several steps; first mitochondria are tethered together, then brought into close contact, followed by the formation of a docking ring around contact areas, and finally membrane fusion. Fusion of mitochondria occurs in many cell types and constitutes an important step in mitochondrial morphology, which is balanced between fusion and fission, mediated by FZO1 and DNM1, respectively. Functions antagonistically with DNM1. Probably acts by forming membrane contact sites that mediate mitochondrial membrane fusion. Mitochondrial docking and fusion requires GTP hydrolysis. Mitochondrial fusion also promotes increased lifespan. The sequence is that of Mitofusin FZO1 (FZO1) from Saccharomyces cerevisiae (strain ATCC 204508 / S288c) (Baker's yeast).